The chain runs to 423 residues: MDFGLLPPEVNSSRMYSGPGPESMLAAAAAWDGVAAELTSAAVSYGSVVSTLIVEPWMGPAAAAMAAAATPYVGWLAATAALAKETATQARAAAEAFGTAFAMTVPPSLVAANRSRLMSLVAANILGQNSAAIAATQAEYAEMWAQDAAVMYSYEGASAAASALPPFTPPVQGTGPAGPAAAAAATQAAGAGAVADAQATLAQLPPGILSDILSALAANADPLTSGLLGIASTLNPQVGSAQPIVIPTPIGELDVIALYIASIATGSIALAITNTARPWHIGLYGNAGGLGPTQGHPLSSATDEPEPHWGPFGGAAPVSAGVGHAALVGALSVPHSWTTAAPEIQLAVQATPTFSSSAGADPTALNGMPAGLLSGMALASLAARGTTGGGGTRSGTSTDGQEDGRKPPVVVIREQPPPGNPPR.

Residues 383 to 423 are disordered; sequence ARGTTGGGGTRSGTSTDGQEDGRKPPVVVIREQPPPGNPPR.

It belongs to the mycobacterial PPE family.

This is an uncharacterized protein from Mycobacterium tuberculosis (strain CDC 1551 / Oshkosh).